The primary structure comprises 227 residues: Protein CAP22 (227 aa).

N-linked (GlcNAc...) asparagine glycosylation is found at Asn55 and Asn72. The interval 143–162 is disordered; the sequence is TTIGGGATPAPTSERSRTSD.

It localises to the secreted. The protein localises to the cell wall. The sequence is that of Protein CAP22 (CAP22) from Colletotrichum gloeosporioides (Anthracnose fungus).